A 98-amino-acid chain; its full sequence is Small ribosomal subunit protein uS19 (98 aa).

The tract at residues 77–98 (TRTFRGHAGGKAEKGGSAPRKK) is disordered.

This sequence belongs to the universal ribosomal protein uS19 family.

Protein S19 forms a complex with S13 that binds strongly to the 16S ribosomal RNA. In Chlorobium limicola (strain DSM 245 / NBRC 103803 / 6330), this protein is Small ribosomal subunit protein uS19.